A 326-amino-acid chain; its full sequence is Transposase for insertion sequence element IS4351 (326 aa).

Residues 156 to 317 (IDERPEIVEL…TPNEKFKQII (162 aa)) form the Integrase catalytic domain.

The protein belongs to the transposase IS30 family.

Required for the transposition of the insertion element. This Bacteroides fragilis protein is Transposase for insertion sequence element IS4351.